The sequence spans 355 residues: Uroporphyrinogen decarboxylase (355 aa).

Substrate contacts are provided by residues 27–31 (RQAGR), Asp-77, Tyr-154, Thr-209, and His-327.

Belongs to the uroporphyrinogen decarboxylase family. Homodimer.

Its subcellular location is the cytoplasm. It carries out the reaction uroporphyrinogen III + 4 H(+) = coproporphyrinogen III + 4 CO2. It participates in porphyrin-containing compound metabolism; protoporphyrin-IX biosynthesis; coproporphyrinogen-III from 5-aminolevulinate: step 4/4. Functionally, catalyzes the decarboxylation of four acetate groups of uroporphyrinogen-III to yield coproporphyrinogen-III. The sequence is that of Uroporphyrinogen decarboxylase from Aeromonas salmonicida (strain A449).